The following is a 172-amino-acid chain: Single-stranded DNA-binding protein 2 (172 aa).

The SSB domain occupies 6 to 111 (VNKVILVGHI…VIVNVGGTMQ (106 aa)). The DNA-binding element occupies 55 to 61 (WHRVVVF). The disordered stretch occupies residues 113-172 (LGRHNSQPQQEPQTPPTAAKGEGKAVKGAGNAAKGKNAAAPQQPPAQPDPAYDFDDDIPF). Residues 119–153 (QPQQEPQTPPTAAKGEGKAVKGAGNAAKGKNAAAP) are compositionally biased toward low complexity. Positions 167-172 (DDDIPF) match the Important for interaction with partner proteins motif.

In terms of assembly, homotetramer.

Its function is as follows. Plays an important role in DNA replication, recombination and repair. Binds to ssDNA and to an array of partner proteins to recruit them to their sites of action during DNA metabolism. The chain is Single-stranded DNA-binding protein 2 (ssb2) from Salmonella typhimurium (strain LT2 / SGSC1412 / ATCC 700720).